The following is a 208-amino-acid chain: Thymidylate kinase (208 aa).

10 to 17 (GIDGCGKT) is an ATP binding site.

This sequence belongs to the thymidylate kinase family.

It catalyses the reaction dTMP + ATP = dTDP + ADP. Phosphorylation of dTMP to form dTDP in both de novo and salvage pathways of dTTP synthesis. The sequence is that of Thymidylate kinase from Caldanaerobacter subterraneus subsp. tengcongensis (strain DSM 15242 / JCM 11007 / NBRC 100824 / MB4) (Thermoanaerobacter tengcongensis).